The chain runs to 495 residues: UDP-glycosyltransferase 71B7 (495 aa).

Residues Ser-284, 351–353 (APQ), 368–376 (HCGWNSTLE), and 390–393 (YAEQ) contribute to the UDP-alpha-D-glucose site.

This sequence belongs to the UDP-glycosyltransferase family.

The sequence is that of UDP-glycosyltransferase 71B7 (UGT71B7) from Arabidopsis thaliana (Mouse-ear cress).